The primary structure comprises 255 residues: 3-oxo-5-alpha-steroid 4-dehydrogenase 1 (255 aa).

Transmembrane regions (helical) follow at residues Leu6 to Gly26, Val82 to Ile102, Pro107 to Gln127, Val142 to Ile162, and Phe205 to Leu225.

The protein belongs to the steroid 5-alpha reductase family.

It localises to the microsome membrane. The protein resides in the endoplasmic reticulum membrane. It carries out the reaction a 3-oxo-5alpha-steroid + NADP(+) = a 3-oxo-Delta(4)-steroid + NADPH + H(+). The enzyme catalyses 5alpha-pregnane-3,20-dione + NADP(+) = progesterone + NADPH + H(+). It catalyses the reaction 17beta-hydroxy-5alpha-androstan-3-one + NADP(+) = testosterone + NADPH + H(+). The catalysed reaction is androst-4-ene-3,17-dione + NADPH + H(+) = 5alpha-androstan-3,17-dione + NADP(+). Converts testosterone into 5-alpha-dihydrotestosterone and progesterone or corticosterone into their corresponding 5-alpha-3-oxosteroids. It plays a central role in sexual differentiation and androgen physiology. This chain is 3-oxo-5-alpha-steroid 4-dehydrogenase 1, found in Mus musculus (Mouse).